A 64-amino-acid chain; its full sequence is Large ribosomal subunit protein bL28C (64 aa).

The protein belongs to the bacterial ribosomal protein bL28 family.

In Mycobacterium tuberculosis (strain ATCC 25618 / H37Rv), this protein is Large ribosomal subunit protein bL28C.